The chain runs to 385 residues: Putative ESX-1 scaffolding and assembly protein SaeC (385 aa).

The protein localises to the cytoplasm. Its function is as follows. May be involved in assembly of the ESX-1 / type VII specialized secretion system (T7SS), which exports several proteins including EsxA and EsxB. Involved in DNA conjugation in recipient (MKD8) strain. The polypeptide is Putative ESX-1 scaffolding and assembly protein SaeC (Mycolicibacterium smegmatis (strain ATCC 700084 / mc(2)155) (Mycobacterium smegmatis)).